A 360-amino-acid chain; its full sequence is GDSL esterase/lipase At1g58430 (360 aa).

Residues Met-1–Ala-23 form the signal peptide. The N-linked (GlcNAc...) asparagine glycan is linked to Asn-22. The Nucleophile role is filled by Ser-42. 2 N-linked (GlcNAc...) asparagine glycosylation sites follow: Asn-104 and Asn-326. Residues Asp-334 and His-337 contribute to the active site.

It belongs to the 'GDSL' lipolytic enzyme family.

Its subcellular location is the secreted. The chain is GDSL esterase/lipase At1g58430 from Arabidopsis thaliana (Mouse-ear cress).